We begin with the raw amino-acid sequence, 1304 residues long: Angiotensin-converting enzyme (1304 aa).

The signal sequence occupies residues 1–27 (MGAASGRRGPGLLLPLLLLLPPQPALA). Residues 28–1257 (LDPGLQPGNF…LDAQQARVGQ (1230 aa)) are Extracellular-facing. N36, N52, N72, N109, N144, and N158 each carry an N-linked (GlcNAc...) asparagine glycan. 2 Peptidase M2 domains span residues 38-622 (SADE…LGWP) and 641-1220 (VTDE…LGWP). A disulfide bond links C155 and C163. Y229 serves as a coordination point for chloride. A glycan (N-linked (GlcNAc...) asparagine) is linked at N316. A disulfide bridge links C357 with C375. Position 388 (H388) interacts with Zn(2+). E389 serves as the catalytic Proton acceptor 1. H392 and E416 together coordinate Zn(2+). N440, N443, and N507 each carry an N-linked (GlcNAc...) asparagine glycan. Residue H518 is the Proton donor 1 of the active site. Residue R527 coordinates chloride. C543 and C555 are joined by a disulfide. A glycan (N-linked (GlcNAc...) asparagine) is linked at N675. N-linked (GlcNAc...) (complex) asparagine glycans are attached at residues N693 and N712. Cysteines 755 and 761 form a disulfide. N758 carries an N-linked (GlcNAc...) asparagine glycan. Chloride-binding residues include R789 and Y827. An N-linked (GlcNAc...) asparagine glycan is attached at N940. Residues C955 and C973 are joined by a disulfide bond. H986 is a binding site for Zn(2+). E987 acts as the Proton acceptor 2 in catalysis. 2 residues coordinate Zn(2+): H990 and E1014. Residues W1088 and R1092 each contribute to the chloride site. H1116 serves as the catalytic Proton donor 2. R1125 lines the chloride pocket. C1141 and C1153 are disulfide-bonded. N-linked (GlcNAc...) asparagine glycosylation is present at N1189. The interval 1213 to 1254 (HGEKLGWPQYNWTPNSARSEGPLPDSGRVSFLGLDLDAQQAR) is juxtamembrane stalk. The helical transmembrane segment at 1258-1274 (WLLLFLGIALLVATLGL) threads the bilayer. The Cytoplasmic portion of the chain corresponds to 1275–1304 (SQRLFSIRHRSLHRHSHGPQFDSEVELRHS). S1297 is subject to Phosphoserine.

Belongs to the peptidase M2 family. In terms of assembly, monomer and homodimer; homodimerizes following binding to an inhibitor. Interacts with calmodulin (CALM1, CALM2 or CALM3); interaction takes place in the cytoplasmic region and regulates phosphorylation and proteolytic cleavage. Zn(2+) is required as a cofactor. Chloride serves as cofactor. Produced following proteolytic cleavage by secretase enzymes that cleave the transmembrane form in the juxtamembrane stalk region upstream of the transmembrane region. Cleavage can take place at different sites of the juxtamembrane stalk region. Post-translationally, phosphorylated by CK2 on Ser-1297; which allows membrane retention. Phosphorylated on tyrosine residues on its extracellular part, promoting cleavage by secretase enzymes and formation of the soluble form (Angiotensin-converting enzyme, soluble form).

The protein resides in the cell membrane. It localises to the cytoplasm. It is found in the secreted. It catalyses the reaction Release of a C-terminal dipeptide, oligopeptide-|-Xaa-Yaa, when Xaa is not Pro, and Yaa is neither Asp nor Glu. Thus, conversion of angiotensin I to angiotensin II, with increase in vasoconstrictor activity, but no action on angiotensin II.. The catalysed reaction is angiotensin I + H2O = L-histidyl-L-leucine + angiotensin II. The enzyme catalyses bradykinin + H2O = L-Phe-L-Arg + bradykinin(1-7). It carries out the reaction substance P + H2O = substance P(1-9) + L-Leu-L-Met-NH2. It catalyses the reaction substance P + H2O = substance P(1-8) + Gly-L-Leu-L-Met-NH2. The catalysed reaction is substance P + H2O = L-Phe-L-Phe-Gly-L-Leu-L-Met-NH2 + substance P(1-6). The enzyme catalyses neurotensin + H2O = neurotensin(1-11) + L-isoleucyl-L-leucine. It carries out the reaction goralatide + H2O = N-acetyl-L-seryl-L-aspartate + L-lysyl-L-proline. It catalyses the reaction Met-enkephalin + H2O = L-phenylalanyl-L-methionine + L-tyrosylglycylglycine. The catalysed reaction is Leu-enkephalin + H2O = L-tyrosylglycylglycine + L-phenylalanyl-L-leucine. The enzyme catalyses Met-enkephalin-Arg-Phe + H2O = L-arginyl-L-phenylalanine + Met-enkephalin. Its activity is regulated as follows. The dipeptidyl carboxypeptidase activity is strongly activated by chloride. The dipeptidyl carboxypeptidase activity is specifically inhibited by lisinopril, captopril and enalaprilat. With respect to regulation, strongly inhibited by lisinopril and captopril. Its function is as follows. Dipeptidyl carboxypeptidase that removes dipeptides from the C-terminus of a variety of circulating hormones, such as angiotensin I, bradykinin or enkephalins, thereby playing a key role in the regulation of blood pressure, electrolyte homeostasis or synaptic plasticity. Composed of two similar catalytic domains, each possessing a functional active site, with different selectivity for substrates. Plays a major role in the angiotensin-renin system that regulates blood pressure and sodium retention by the kidney by converting angiotensin I to angiotensin II, resulting in an increase of the vasoconstrictor activity of angiotensin. Also able to inactivate bradykinin, a potent vasodilator, and therefore enhance the blood pressure response. Acts as a regulator of synaptic transmission by mediating cleavage of neuropeptide hormones, such as substance P, neurotensin or enkephalins. Catalyzes degradation of different enkephalin neuropeptides (Met-enkephalin, Leu-enkephalin, Met-enkephalin-Arg-Phe and possibly Met-enkephalin-Arg-Gly-Leu). Acts as a regulator of synaptic plasticity in the nucleus accumbens of the brain by mediating cleavage of Met-enkephalin-Arg-Phe, a strong ligand of Mu-type opioid receptor OPRM1, into Met-enkephalin. Met-enkephalin-Arg-Phe cleavage by ACE decreases activation of OPRM1, leading to long-term synaptic potentiation of glutamate release. Also acts as a regulator of hematopoietic stem cell differentiation by mediating degradation of hemoregulatory peptide N-acetyl-SDKP (AcSDKP). Acts as a regulator of cannabinoid signaling pathway by mediating degradation of hemopressin, an antagonist peptide of the cannabinoid receptor CNR1. Involved in amyloid-beta metabolism by catalyzing degradation of Amyloid-beta protein 40 and Amyloid-beta protein 42 peptides, thereby preventing plaque formation. Catalyzes cleavage of cholecystokinin (maturation of Cholecystokinin-8 and Cholecystokinin-5) and Gonadoliberin-1 (both maturation and degradation) hormones. Degradation of hemoregulatory peptide N-acetyl-SDKP (AcSDKP) and amyloid-beta proteins is mediated by the N-terminal catalytic domain, while angiotensin I and cholecystokinin cleavage is mediated by the C-terminal catalytic region. In terms of biological role, soluble form that is released in blood plasma and other body fluids following proteolytic cleavage in the juxtamembrane stalk region. Functionally, isoform produced by alternative promoter usage that is specifically expressed in spermatocytes and adult testis, and which is required for male fertility. In contrast to somatic isoforms, only contains one catalytic domain. Acts as a dipeptidyl carboxypeptidase that removes dipeptides from the C-terminus of substrates. The identity of substrates that are needed for male fertility is unknown. May also have a glycosidase activity which releases GPI-anchored proteins from the membrane by cleaving the mannose linkage in the GPI moiety. The GPIase activity was reported to be essential for the egg-binding ability of the sperm. This activity is however unclear and has been challenged by other groups, suggesting that it may be indirect. The protein is Angiotensin-converting enzyme of Pan troglodytes (Chimpanzee).